The chain runs to 387 residues: 3-ketoacyl-CoA thiolase (387 aa).

Catalysis depends on Cys-91, which acts as the Acyl-thioester intermediate. Catalysis depends on proton acceptor residues His-343 and Cys-373.

The protein belongs to the thiolase-like superfamily. Thiolase family. In terms of assembly, heterotetramer of two alpha chains (FadB) and two beta chains (FadA).

The protein localises to the cytoplasm. It catalyses the reaction an acyl-CoA + acetyl-CoA = a 3-oxoacyl-CoA + CoA. It participates in lipid metabolism; fatty acid beta-oxidation. Functionally, catalyzes the final step of fatty acid oxidation in which acetyl-CoA is released and the CoA ester of a fatty acid two carbons shorter is formed. The polypeptide is 3-ketoacyl-CoA thiolase (Photobacterium profundum (strain SS9)).